Reading from the N-terminus, the 64-residue chain is DNA gyrase inhibitor YacG (64 aa).

The Zn(2+) site is built by Cys-9, Cys-12, Cys-28, and Cys-32. The tract at residues 45 to 64 (NAIAGAPDMSDSDGWSEDQY) is disordered. Residues 54–64 (SDSDGWSEDQY) are compositionally biased toward acidic residues.

It belongs to the DNA gyrase inhibitor YacG family. Interacts with GyrB. Requires Zn(2+) as cofactor.

Inhibits all the catalytic activities of DNA gyrase by preventing its interaction with DNA. Acts by binding directly to the C-terminal domain of GyrB, which probably disrupts DNA binding by the gyrase. The protein is DNA gyrase inhibitor YacG of Vibrio parahaemolyticus serotype O3:K6 (strain RIMD 2210633).